We begin with the raw amino-acid sequence, 280 residues long: tRNA (guanine-N(1)-)-methyltransferase (280 aa).

Residues 71 to 94 are disordered; the sequence is DDVSSGTASTQDLQSALPHLSKPR. Polar residues predominate over residues 74–84; that stretch reads SSGTASTQDLQ. Residues glycine 146 and 170–175 each bind S-adenosyl-L-methionine; that span reads IGDYVL.

It belongs to the RNA methyltransferase TrmD family. Homodimer.

It is found in the cytoplasm. It catalyses the reaction guanosine(37) in tRNA + S-adenosyl-L-methionine = N(1)-methylguanosine(37) in tRNA + S-adenosyl-L-homocysteine + H(+). Functionally, specifically methylates guanosine-37 in various tRNAs. This is tRNA (guanine-N(1)-)-methyltransferase from Corynebacterium aurimucosum (strain ATCC 700975 / DSM 44827 / CIP 107346 / CN-1) (Corynebacterium nigricans).